A 38-amino-acid polypeptide reads, in one-letter code: U9-ctenitoxin-Pk1a (38 aa).

Cystine bridges form between Cys-2–Cys-17, Cys-9–Cys-22, Cys-16–Cys-36, and Cys-24–Cys-34.

In terms of tissue distribution, expressed by the venom gland.

Its subcellular location is the secreted. The chain is U9-ctenitoxin-Pk1a from Phoneutria keyserlingi (Brazilian wandering spider).